A 145-amino-acid polypeptide reads, in one-letter code: 3-dehydroquinate dehydratase (145 aa).

Catalysis depends on tyrosine 23, which acts as the Proton acceptor. Substrate-binding residues include asparagine 74, histidine 80, and aspartate 87. The active-site Proton donor is the histidine 100. Substrate is bound by residues 101–102 and arginine 111; that span reads IS.

It belongs to the type-II 3-dehydroquinase family. Homododecamer.

It catalyses the reaction 3-dehydroquinate = 3-dehydroshikimate + H2O. The protein operates within metabolic intermediate biosynthesis; chorismate biosynthesis; chorismate from D-erythrose 4-phosphate and phosphoenolpyruvate: step 3/7. In terms of biological role, catalyzes a trans-dehydration via an enolate intermediate. The polypeptide is 3-dehydroquinate dehydratase (Mycobacterium leprae (strain Br4923)).